Here is a 106-residue protein sequence, read N- to C-terminus: Small ribosomal subunit protein uS10 (106 aa).

It belongs to the universal ribosomal protein uS10 family. Part of the 30S ribosomal subunit.

In terms of biological role, involved in the binding of tRNA to the ribosomes. The chain is Small ribosomal subunit protein uS10 from Hyphomonas neptunium (strain ATCC 15444).